We begin with the raw amino-acid sequence, 453 residues long: Ribose 1,5-bisphosphate phosphokinase PhnN (453 aa).

The disordered stretch occupies residues Met-1 to Leu-21. The segment at Met-1–Pro-271 is unknown. Residues His-272–Lys-453 are ribose 1,5-bisphosphokinase.

In the C-terminal section; belongs to the ribose 1,5-bisphosphokinase family.

It catalyses the reaction alpha-D-ribose 1,5-bisphosphate + ATP = 5-phospho-alpha-D-ribose 1-diphosphate + ADP. The protein operates within metabolic intermediate biosynthesis; 5-phospho-alpha-D-ribose 1-diphosphate biosynthesis; 5-phospho-alpha-D-ribose 1-diphosphate from D-ribose 5-phosphate (route II): step 3/3. Its function is as follows. Catalyzes the phosphorylation of ribose 1,5-bisphosphate to 5-phospho-D-ribosyl alpha-1-diphosphate (PRPP). This chain is Ribose 1,5-bisphosphate phosphokinase PhnN (phnN), found in Janthinobacterium sp. (strain Marseille) (Minibacterium massiliensis).